The primary structure comprises 750 residues: Ribosomal RNA large subunit methyltransferase K/L (750 aa).

The region spanning 46 to 157 is the THUMP domain; it reads TAYRLCLWSR…RGEAILSLDL (112 aa).

The protein belongs to the methyltransferase superfamily. RlmKL family.

Its subcellular location is the cytoplasm. The catalysed reaction is guanosine(2445) in 23S rRNA + S-adenosyl-L-methionine = N(2)-methylguanosine(2445) in 23S rRNA + S-adenosyl-L-homocysteine + H(+). It carries out the reaction guanosine(2069) in 23S rRNA + S-adenosyl-L-methionine = N(2)-methylguanosine(2069) in 23S rRNA + S-adenosyl-L-homocysteine + H(+). Its function is as follows. Specifically methylates the guanine in position 2445 (m2G2445) and the guanine in position 2069 (m7G2069) of 23S rRNA. The sequence is that of Ribosomal RNA large subunit methyltransferase K/L from Pseudomonas syringae pv. syringae (strain B728a).